We begin with the raw amino-acid sequence, 350 residues long: uncharacterized protein (350 aa).

Mn(2+) contacts are provided by aspartate 214, aspartate 225, histidine 289, glutamate 318, and glutamate 332.

This sequence belongs to the peptidase M24B family. Mn(2+) is required as a cofactor.

This is an uncharacterized protein from Staphylococcus saprophyticus subsp. saprophyticus (strain ATCC 15305 / DSM 20229 / NCIMB 8711 / NCTC 7292 / S-41).